The following is a 318-amino-acid chain: Biotin synthase (318 aa).

The Radical SAM core domain maps to 40–260 (DDIQKASLLS…VATARIIMPL (221 aa)). C55, C59, and C62 together coordinate [4Fe-4S] cluster. C100, C132, C192, and R264 together coordinate [2Fe-2S] cluster.

It belongs to the radical SAM superfamily. Biotin synthase family. Homodimer. The cofactor is [4Fe-4S] cluster. It depends on [2Fe-2S] cluster as a cofactor.

It carries out the reaction (4R,5S)-dethiobiotin + (sulfur carrier)-SH + 2 reduced [2Fe-2S]-[ferredoxin] + 2 S-adenosyl-L-methionine = (sulfur carrier)-H + biotin + 2 5'-deoxyadenosine + 2 L-methionine + 2 oxidized [2Fe-2S]-[ferredoxin]. The protein operates within cofactor biosynthesis; biotin biosynthesis; biotin from 7,8-diaminononanoate: step 2/2. Catalyzes the conversion of dethiobiotin (DTB) to biotin by the insertion of a sulfur atom into dethiobiotin via a radical-based mechanism. In Ruegeria pomeroyi (strain ATCC 700808 / DSM 15171 / DSS-3) (Silicibacter pomeroyi), this protein is Biotin synthase.